The sequence spans 361 residues: Uroporphyrinogen decarboxylase (361 aa).

Substrate contacts are provided by residues 27–31 (RQAGR), D77, Y154, T209, and H327.

The protein belongs to the uroporphyrinogen decarboxylase family. As to quaternary structure, homodimer.

Its subcellular location is the cytoplasm. The catalysed reaction is uroporphyrinogen III + 4 H(+) = coproporphyrinogen III + 4 CO2. It functions in the pathway porphyrin-containing compound metabolism; protoporphyrin-IX biosynthesis; coproporphyrinogen-III from 5-aminolevulinate: step 4/4. In terms of biological role, catalyzes the decarboxylation of four acetate groups of uroporphyrinogen-III to yield coproporphyrinogen-III. The sequence is that of Uroporphyrinogen decarboxylase from Coxiella burnetii (strain RSA 331 / Henzerling II).